Consider the following 1252-residue polypeptide: MFKCPERVSVKKKEDILDLPNLVEVQIKSYKQFLQIGKLAEERENIGLEEVFREIFPIKSYNEATILEYLSYNLGVPKYSPEECIRRGITYSVTLKVRFRLTDETGIKEEEVYMGTIPIMTDKGTFIINGAERVVVSQVHRSPGINFEQEKHSKGNVLFSFRIIPYRGSWLEAVFDINDLIYIHIDRKKRRRKILAMTFIRALGYSTDADIIEEFFSVEERSLRSEKDFVALVGKVLADNVVDADSSLVYGKAGEKLSTAMLKRILDTGVQSLKIAVGADENHPIIKMLAKDPTDSYEAALKDFYRRLRPGEPATLANARSTIMRLFFDAKRYNLGRVGRYKLNKKLGFPLDDETLSQVTLRKEDVIGALKYLIRLRMGDEKTSIDDIDHLANRRVRSVGELIQNHCRSGLARMEKIVRERMNLFDFSSDTLTPGKIISAKGLVSVLKDFFSRSQLSQFMDQTNPVAELTHKRRLSALGPGGLNRERAGFEVRDVHASHYGRICPIETPEGPNIGLITSLSSFAKINEFGFIETPYRVVRDGIVTDEIEYMTADVEEECVIAQASAELDEYNMFKTPVCWARYKGEAFEADTSTVTHMDVSPKQLVSVVTGLIPFLEHDDANRALMGSNMQRQAVPLLKTEAAIVGTGLEGRAAKDSGAIIVAQEDGVVEYVDSYEIVVAKKNNPTLKDRYQLKKFLRSNSGTCINQTPLCSVGDVVTHGDVLADGPATDKGELALGKNVLVAFMPWYGYNFEDAIIISERLIKQDAYTSIYIEEFELTARDTKLGKEEITRDIPNVSEEVLANLGEDGIVRIGAEVKPGDILVGKITPKSETELAPEERLLRAIFGEKAADVKDASLTVPPGTEGVVMDVKVFSRKDRLSKSDDELVEEAVHLKDLQKEYKSQLAQLKVEHREKLGALLLNEKAPAAIVHRRSADILVQEGAIFDQETIELLERESLVDLLIAPCDMYDVLKDILSSYETAVQRLEVNYKTEAEHIKEGDADLDHGVIRQVKVYVASKRKLQVGDKMAGRHGNKGVVSKIVPEADMPFLANGETVQMILNPLGVPSRMNLGQVLETHLGYAAKTAGIYVKTPVFEGFPESRIWDMMIEQGLPEDGKSYLFDGKTGERFDSKVVVGYIYMLKLSHLIADKIHARSIGPYSLVTQQPLGGKAQMGGQRFGEMEVWALEAYGVAHMLQEILTVKSDDVSGRTRIYESIVKGENLLRSGTPESFNVLIKEMQGLGLDVRPMVVDA.

The protein belongs to the RNA polymerase beta chain family. In terms of assembly, the RNAP catalytic core consists of 2 alpha, 1 beta, 1 beta' and 1 omega subunit. When a sigma factor is associated with the core the holoenzyme is formed, which can initiate transcription.

It catalyses the reaction RNA(n) + a ribonucleoside 5'-triphosphate = RNA(n+1) + diphosphate. Functionally, DNA-dependent RNA polymerase catalyzes the transcription of DNA into RNA using the four ribonucleoside triphosphates as substrates. The polypeptide is DNA-directed RNA polymerase subunit beta (Chlamydia trachomatis serovar L2 (strain ATCC VR-902B / DSM 19102 / 434/Bu)).